The primary structure comprises 94 residues: Integration host factor subunit beta (94 aa).

The protein belongs to the bacterial histone-like protein family. As to quaternary structure, heterodimer of an alpha and a beta chain.

This protein is one of the two subunits of integration host factor, a specific DNA-binding protein that functions in genetic recombination as well as in transcriptional and translational control. This is Integration host factor subunit beta from Serratia proteamaculans (strain 568).